The sequence spans 285 residues: GPN-loop GTPase 3 (285 aa).

GTP is bound at residue 13 to 18 (GSGKST). The Gly-Pro-Asn (GPN)-loop; involved in dimer interface motif lies at 72–74 (GPN). Position 174 to 177 (174 to 177 (TKMD)) interacts with GTP. The tract at residues 261–285 (KEPKENEEDKSENFDEFFQDRADEP) is disordered. The span at 265 to 277 (ENEEDKSENFDEF) shows a compositional bias: acidic residues.

The protein belongs to the GPN-loop GTPase family. Heterodimer with gpn1. Binds to RNA polymerase II (RNAPII).

Small GTPase required for proper localization of RNA polymerase II (RNAPII). May act at an RNAP assembly step prior to nuclear import. The chain is GPN-loop GTPase 3 from Xenopus tropicalis (Western clawed frog).